The primary structure comprises 183 residues: Putative manganese efflux pump MntP (183 aa).

Helical transmembrane passes span I8–G28, F40–V60, A72–F92, L108–F128, M133–V153, and S163–L183.

It belongs to the MntP (TC 9.B.29) family.

It localises to the cell membrane. Functionally, probably functions as a manganese efflux pump. This chain is Putative manganese efflux pump MntP, found in Geobacillus kaustophilus (strain HTA426).